A 176-amino-acid polypeptide reads, in one-letter code: Mitochondrial inner membrane protein Mpv17 (176 aa).

4 consecutive transmembrane segments (helical) span residues 18–38, 53–73, 94–114, and 131–151; these read VQVL…QQLV, TMVS…YKVL, GGFA…LNGL, and LITN…LVPL.

The protein belongs to the peroxisomal membrane protein PXMP2/4 family. In terms of tissue distribution, ubiquitous. Expressed in pancreas, kidney, muscle, liver, lung, placenta, brain and heart.

It localises to the mitochondrion inner membrane. In terms of biological role, non-selective channel that modulates the membrane potential under normal conditions and oxidative stress, and is involved in mitochondrial homeostasis. Involved in mitochondrial deoxynucleoside triphosphates (dNTP) pool homeostasis and mitochondrial DNA (mtDNA) maintenance. May be involved in the regulation of reactive oxygen species metabolism and the control of oxidative phosphorylation. This Homo sapiens (Human) protein is Mitochondrial inner membrane protein Mpv17.